Reading from the N-terminus, the 207-residue chain is uncharacterized protein (207 aa).

The 188-residue stretch at 14-201 (ARLINQAVEI…SPVILREGSG (188 aa)) folds into the YrdC-like domain.

This sequence belongs to the SUA5 family.

This is an uncharacterized protein from Haemophilus influenzae (strain ATCC 51907 / DSM 11121 / KW20 / Rd).